We begin with the raw amino-acid sequence, 222 residues long: Chorionic somatomammotropin hormone-like 1 (222 aa).

The N-terminal stretch at 1–26 (MAAGSRTSLLLAFALLCLPWLQEAGA) is a signal peptide. 2 residues coordinate Zn(2+): H44 and E205. C213 and C220 are disulfide-bonded.

It belongs to the somatotropin/prolactin family.

It is found in the secreted. Functionally, may be a novel gestational hormone required to compensate for absence of other members of the GH/CS cluster during gestation. This chain is Chorionic somatomammotropin hormone-like 1 (CSHL1), found in Homo sapiens (Human).